The sequence spans 586 residues: MQYHLQVEPHRCAHRTFPSPMTDAVVASEYLDESAKWENFKLDPRLLQAVYQLGFEKPTLIQSNAIPLSLEDKRDIIAKASTGSGKTGAYSIPIIQNILSEGLSEHNIKSVILVPTKELANQVTKFIEKLLVYCNSITQINLATNVSDQVVVSLLSAKPEIIISTPSRLTTVLEKHASIVDLTTVTSLAIDEVDLMLSYGYMEDLQKLDDFLPIKRNLQTYLMSATVNDDVNDLKARFCTKPAIIKLNDNEENQNRLVQFYARTSEFDKFLFAYVIFKLHLIKGKTLAFVNNIDRGYRLKLFLEQFGVRCCILNSELPVNSRLHIVDEFNKNVYNLLIASDESTEVTEQEGEDDQEDSKPEKSKKKKGKKVDGEYGVSRGVDFRNVACVLNFDLPTTSRSYVHRVGRTARAGKAGMALSFVVPVKEVGKHKTATNPGAKRDEKVLARIVKSQSKNGFEIKPYQFDMTQVEGFRYRAEDAFRAVTSAAIREARIRELKNEIMNSEKLKRFFEENPQDLASLRHDKELHPAKVQSQLKRVPDYLLPESARQDPKKIGFVPFHKNKVHKNRKRKGGKKVDALKSFRQKK.

The Q motif motif lies at 35 to 63 (AKWENFKLDPRLLQAVYQLGFEKPTLIQS). The Helicase ATP-binding domain occupies 67–245 (PLSLEDKRDI…ARFCTKPAII (179 aa)). 80 to 87 (ASTGSGKT) serves as a coordination point for ATP. A DEAD box motif is present at residues 191 to 194 (DEVD). The Helicase C-terminal domain occupies 274 to 467 (YVIFKLHLIK…EIKPYQFDMT (194 aa)). Acidic residues predominate over residues 344–356 (TEVTEQEGEDDQE). 2 disordered regions span residues 344-372 (TEVT…KKVD) and 562-586 (NKVH…RQKK). The span at 562-573 (NKVHKNRKRKGG) shows a compositional bias: basic residues.

The protein belongs to the DEAD box helicase family. DDX56/DBP9 subfamily.

It localises to the nucleus. Its subcellular location is the nucleolus. It catalyses the reaction ATP + H2O = ADP + phosphate + H(+). Its function is as follows. ATP-binding RNA helicase involved in the biogenesis of 60S ribosomal subunits and is required for the normal formation of 25S and 5.8S rRNAs. The polypeptide is ATP-dependent RNA helicase DBP9 (DBP9) (Meyerozyma guilliermondii (strain ATCC 6260 / CBS 566 / DSM 6381 / JCM 1539 / NBRC 10279 / NRRL Y-324) (Yeast)).